Consider the following 96-residue polypeptide: MSTLKMMLLILLLLLPLATFDSDGQAIPGGGIPSAVNSRVGRLLGGDEKSGRSLEKRCSSGKTCGSVEPVLCCARSDCYCRLIQTRSYWVPICVCP.

Residues 1-20 (MSTLKMMLLILLLLLPLATF) form the signal peptide. Residues 21–57 (DSDGQAIPGGGIPSAVNSRVGRLLGGDEKSGRSLEKR) constitute a propeptide that is removed on maturation.

Belongs to the conotoxin N superfamily. In terms of processing, contains 4 disulfide bonds. As to expression, expressed by the venom duct.

It is found in the secreted. This chain is Conotoxin Mr15.1, found in Conus marmoreus (Marble cone).